Here is a 107-residue protein sequence, read N- to C-terminus: Nucleoid-associated protein YaaK (107 aa).

Residues 1-24 (MRGGMGNMQKMMKQMQKMQKDMAK) form a disordered region. A compositionally biased stretch (low complexity) spans 8 to 17 (MQKMMKQMQK).

Belongs to the YbaB/EbfC family. Homodimer.

The protein localises to the cytoplasm. Its subcellular location is the nucleoid. Functionally, binds to DNA and alters its conformation. May be involved in regulation of gene expression, nucleoid organization and DNA protection. The protein is Nucleoid-associated protein YaaK (yaaK) of Bacillus subtilis (strain 168).